The primary structure comprises 142 residues: NADH-quinone oxidoreductase subunit A 2 (142 aa).

3 helical membrane passes run 18-38 (FLPLALYTLAASILIGVLLLA), 73-93 (FYLIAIFFIVFDVEAAFIFAW), and 104-124 (GLVHITFFIVILLLGLVWLWL).

It belongs to the complex I subunit 3 family. NDH-1 is composed of 14 different subunits. Subunits NuoA, H, J, K, L, M, N constitute the membrane sector of the complex.

It is found in the cell inner membrane. The enzyme catalyses a quinone + NADH + 5 H(+)(in) = a quinol + NAD(+) + 4 H(+)(out). In terms of biological role, NDH-1 shuttles electrons from NADH, via FMN and iron-sulfur (Fe-S) centers, to quinones in the respiratory chain. The immediate electron acceptor for the enzyme in this species is believed to be ubiquinone. Couples the redox reaction to proton translocation (for every two electrons transferred, four hydrogen ions are translocated across the cytoplasmic membrane), and thus conserves the redox energy in a proton gradient. The chain is NADH-quinone oxidoreductase subunit A 2 from Geobacter sulfurreducens (strain ATCC 51573 / DSM 12127 / PCA).